The chain runs to 213 residues: Pyrrolidone-carboxylate peptidase (213 aa).

Residues E78, C141, and H165 contribute to the active site.

This sequence belongs to the peptidase C15 family. As to quaternary structure, homotetramer.

It localises to the cytoplasm. It carries out the reaction Release of an N-terminal pyroglutamyl group from a polypeptide, the second amino acid generally not being Pro.. Removes 5-oxoproline from various penultimate amino acid residues except L-proline. The polypeptide is Pyrrolidone-carboxylate peptidase (Clostridium botulinum (strain Alaska E43 / Type E3)).